Consider the following 252-residue polypeptide: Hsp70-Hsp90 organising protein (252 aa).

TPR repeat units follow at residues 7 to 40, 41 to 74, and 75 to 108; these read AQRL…DPLD, HVLY…KKDW, and PKGY…DPNN. The stretch at 197–239 forms a coiled coil; sequence EGNDAEERQRQQREEEERRKKKEEEERKKKEEEEMKKQNRTPE. The interval 199–252 is disordered; sequence NDAEERQRQQREEEERRKKKEEEERKKKEEEEMKKQNRTPEQIQGDEHKLKVMN. 2 stretches are compositionally biased toward basic and acidic residues: residues 201–233 and 243–252; these read AEER…EMKK and GDEHKLKVMN.

As to quaternary structure, monomer. Homodimer. Forms a complex composed of HOP and chaperones HSP70 and HSP90; the interaction is stronger in the absence of ATP. Interacts (via TPR 1, 2, 3, 7, 8 and 9 repeats) with HSP70 (via C-terminus); the interaction is direct and is stronger in the absence of ATP. Interacts (via TPR 4, 5 and 6 repeats) with HSP90 (via C-terminus); the interaction is direct.

It is found in the cytoplasm. In terms of biological role, acts as a co-chaperone and mediates the association of the chaperones HSP70 and HSP90 probably facilitating substrate transfer from HSP70 to HSP90. Stimulates HSP70 ATPase activity and, in contrast, inhibits HSP90 ATPase activity. The chain is Hsp70-Hsp90 organising protein from Plasmodium falciparum.